The chain runs to 173 residues: Small ribosomal subunit protein uS5 (173 aa).

An S5 DRBM domain is found at 18–81 (LREKMIAVNR…EQARRGMFKV (64 aa)).

This sequence belongs to the universal ribosomal protein uS5 family. As to quaternary structure, part of the 30S ribosomal subunit. Contacts proteins S4 and S8.

In terms of biological role, with S4 and S12 plays an important role in translational accuracy. Its function is as follows. Located at the back of the 30S subunit body where it stabilizes the conformation of the head with respect to the body. The sequence is that of Small ribosomal subunit protein uS5 from Bordetella avium (strain 197N).